We begin with the raw amino-acid sequence, 130 residues long: MYRAVTRQIEVLVEPEFLPERSSPEKQQFFWAYSITIVNGGPDSVQLKTRHWVITDGFGQQQEVRGEGVVGEQPVIGPGERYEYTSGVPLTTSSGFMTGSYQMVTEDGEAFDLAIPLFSLDSPDIRRTLN.

The ApaG domain occupies 3–127 (RAVTRQIEVL…FSLDSPDIRR (125 aa)).

The polypeptide is Protein ApaG (Afipia carboxidovorans (strain ATCC 49405 / DSM 1227 / KCTC 32145 / OM5) (Oligotropha carboxidovorans)).